The sequence spans 238 residues: Opacity protein opA68 (238 aa).

A signal peptide is located at residue alanine 1. The tract at residues 88-109 (NLQRRTSNGNRRDRKTENQENG) is disordered.

The protein belongs to the opacity porin family.

It is found in the cell outer membrane. Implicated in a number of adherence functions. OPA proteins are implicated in pathogenesis and are subject to phase variation. This is Opacity protein opA68 from Neisseria gonorrhoeae.